The primary structure comprises 368 residues: MSLSAIGFEGLRERLEVSFFEPSLFLDTHGKGLRALSKSQIDEILAPAECTIVSSLSNDELDSYVLSESSLFIFPYKIIIKTCGTTKLLLSIEPLLRLAGGVSLEVKSVRYTRGSFLCPGGQPFPQRNLSEEVSVLDGHFAKMGLSSVAYLMGDDDETKKWHVYSASAPAKNSNGDNNVYTLEMCMSGLDKDKASVFFKNESSSAGSMTDNSGIRKILPQSQICDFEFEPCGYSMNSVEGDASSTIHVTPEDGFSYASFEAVGYDFTTMDLSQLVSRVLTCFEPKQFSVAVHSSVAQKSYDHSGLSVDLEDYGCRETTVGVSRRRERNSDVSEVREAGNVLWFSEIDLKCEWSSNSSCTSEDEKEEGI.

Catalysis depends on residues E9 and R12. Residue S69 is the Schiff-base intermediate with substrate; via pyruvic acid of the active site. Pyruvic acid (Ser); by autocatalysis is present on S69. Residue C83 is the Proton donor; for catalytic activity of the active site. Active-site proton acceptor; for processing activity residues include S234 and H247.

Belongs to the eukaryotic AdoMetDC family. The cofactor is pyruvate. In terms of processing, is synthesized initially as an inactive proenzyme. Formation of the active enzyme involves a self-maturation process in which the active site pyruvoyl group is generated from an internal serine residue via an autocatalytic post-translational modification. Two non-identical subunits are generated from the proenzyme in this reaction, and the pyruvate is formed at the N-terminus of the alpha chain, which is derived from the carboxyl end of the proenzyme. The post-translation cleavage follows an unusual pathway, termed non-hydrolytic serinolysis, in which the side chain hydroxyl group of the serine supplies its oxygen atom to form the C-terminus of the beta chain, while the remainder of the serine residue undergoes an oxidative deamination to produce ammonia and the pyruvoyl group blocking the N-terminus of the alpha chain.

The enzyme catalyses S-adenosyl-L-methionine + H(+) = S-adenosyl 3-(methylsulfanyl)propylamine + CO2. It participates in amine and polyamine biosynthesis; S-adenosylmethioninamine biosynthesis; S-adenosylmethioninamine from S-adenosyl-L-methionine: step 1/1. The sequence is that of S-adenosylmethionine decarboxylase proenzyme 1 (SAMDC1) from Brassica juncea (Indian mustard).